The sequence spans 856 residues: Phosphatidylglycerol lysyltransferase (856 aa).

Helical transmembrane passes span 7–27 (ALSILKIVFPIAVLLFVIYQS), 51–71 (LFMLVLIGLLAVAAMSLYDYV), 88–108 (VSWIANSFNNVLGFGGLAGVG), 128–148 (IAWLTSSMLLGLSVFSIFVAA), 161–181 (PWLWAVVIGFALILPLSLAVS), 208–228 (SVVEWLMAGTVIYFALFAMGI), 235–255 (VFGVFVIAAIGGMISLVPGGF), 280–300 (IVLYRLAYSFIPFILGLFFAA), 342–362 (SLSLIVFVAGLIVLASVSLPI), 375–395 (ALLLFNGLSLSSALILLILPI), 420–440 (FLKGLNISAIFVLPMIIVLLV), 459–479 (IFAVALFTVALFNYNLIAGFI), and 501–521 (HATIMAIIIVPLFFLIFTVVY).

It belongs to the LPG synthase family.

It localises to the cell membrane. It carries out the reaction L-lysyl-tRNA(Lys) + a 1,2-diacyl-sn-glycero-3-phospho-(1'-sn-glycerol) = a 1,2-diacyl-sn-glycero-3-phospho-1'-(3'-O-L-lysyl)-sn-glycerol + tRNA(Lys). In terms of biological role, catalyzes the transfer of a lysyl group from L-lysyl-tRNA(Lys) to membrane-bound phosphatidylglycerol (PG), which produces lysylphosphatidylglycerol (LPG), one of the components of the bacterial membrane with a positive net charge. LPG synthesis contributes to the resistance to cationic antimicrobial peptides (CAMPs) and likely protects B.subtilis against its own CAMPs and against those produced by competiting microorganisms (bacteriocins). In fact, the modification of anionic phosphatidylglycerol with positively charged L-lysine results in repulsion of the peptides. In Bacillus subtilis (strain 168), this protein is Phosphatidylglycerol lysyltransferase (mprF).